A 671-amino-acid polypeptide reads, in one-letter code: Acetyl-coenzyme A synthetase 1 (671 aa).

CoA is bound by residues 210–213 (RGGK) and T329. ATP-binding positions include 405–407 (GEP), 429–434 (DTYWQT), D520, and R535. Position 543 (S543) interacts with CoA. Residue R546 participates in ATP binding. Residue R605 coordinates CoA.

This sequence belongs to the ATP-dependent AMP-binding enzyme family.

The catalysed reaction is acetate + ATP + CoA = acetyl-CoA + AMP + diphosphate. The protein is Acetyl-coenzyme A synthetase 1 (ACS1) of Debaryomyces hansenii (strain ATCC 36239 / CBS 767 / BCRC 21394 / JCM 1990 / NBRC 0083 / IGC 2968) (Yeast).